A 697-amino-acid chain; its full sequence is Protein no-on-transient A (697 aa).

The segment covering 1–29 (MENSVKMDNSGNSTPLPQRQRRANNQPNK) has biased composition (polar residues). The tract at residues 1–253 (MENSVKMDNS…GGNNSQRGDD (253 aa)) is disordered. Residues 61-80 (NGGGGSVVGGGGGGGGGGGQ) are compositionally biased toward gly residues. 2 stretches are compositionally biased toward low complexity: residues 102–118 (RGGN…NQNQ) and 139–191 (ANNA…QNQA). Residues 195–223 (RGGGGGGGGGGGGGGGGGGGGGGGGGGGG) are compositionally biased toward gly residues. Positions 224–233 (GRDRNPDRRG) are enriched in basic and acidic residues. Residues 234 to 246 (GGGGGGQNSGGGN) show a composition bias toward gly residues. RRM domains follow at residues 285–357 (NRLY…FAPN) and 359–445 (TILR…DDND). The stretch at 488 to 586 (DLFKSKQDAL…DMRRRQQENT (99 aa)) forms a coiled coil. Residues 551–565 (EMRKREEETMRRHQT) are compositionally biased toward basic and acidic residues. 2 disordered regions span residues 551 to 575 (EMRK…VRQE) and 601 to 697 (QEGF…RRRF). The span at 603-622 (GFGGGNGGGGGGGGGGGGVG) shows a compositional bias: gly residues. Low complexity-rich tracts occupy residues 623–635 (NSNF…NSNS) and 642–659 (GNNN…GANN).

In terms of biological role, required for normal vision and courtship behavior in Drosophila. The chain is Protein no-on-transient A (nonA) from Drosophila virilis (Fruit fly).